We begin with the raw amino-acid sequence, 84 residues long: Large ribosomal subunit protein bL27c (84 aa).

The segment at Met-1–Val-23 is disordered.

Belongs to the bacterial ribosomal protein bL27 family.

It localises to the plastid. Its subcellular location is the chloroplast. In Thalassiosira pseudonana (Marine diatom), this protein is Large ribosomal subunit protein bL27c.